Consider the following 511-residue polypeptide: UDP-N-acetylmuramoyl-L-alanyl-D-glutamate--2,6-diaminopimelate ligase (511 aa).

S33 serves as a coordination point for UDP-N-acetyl-alpha-D-muramoyl-L-alanyl-D-glutamate. An ATP-binding site is contributed by 118-124 (GTNGKTT). UDP-N-acetyl-alpha-D-muramoyl-L-alanyl-D-glutamate is bound by residues 160-161 (TT), S187, Q193, and R195. N6-carboxylysine is present on K227. Residues R403, 427–430 (DNPR), G478, and E482 each bind meso-2,6-diaminopimelate. The Meso-diaminopimelate recognition motif signature appears at 427 to 430 (DNPR).

Belongs to the MurCDEF family. MurE subfamily. It depends on Mg(2+) as a cofactor. Carboxylation is probably crucial for Mg(2+) binding and, consequently, for the gamma-phosphate positioning of ATP.

It localises to the cytoplasm. It catalyses the reaction UDP-N-acetyl-alpha-D-muramoyl-L-alanyl-D-glutamate + meso-2,6-diaminopimelate + ATP = UDP-N-acetyl-alpha-D-muramoyl-L-alanyl-gamma-D-glutamyl-meso-2,6-diaminopimelate + ADP + phosphate + H(+). It functions in the pathway cell wall biogenesis; peptidoglycan biosynthesis. Functionally, catalyzes the addition of meso-diaminopimelic acid to the nucleotide precursor UDP-N-acetylmuramoyl-L-alanyl-D-glutamate (UMAG) in the biosynthesis of bacterial cell-wall peptidoglycan. The protein is UDP-N-acetylmuramoyl-L-alanyl-D-glutamate--2,6-diaminopimelate ligase of Prochlorococcus marinus subsp. pastoris (strain CCMP1986 / NIES-2087 / MED4).